The primary structure comprises 637 residues: Rab11 family-interacting protein 4 (637 aa).

The EF-hand domain occupies 49–84; sequence GQGEEVEKLVKYLDPNDLGRINFKDFCRGVFAMKGC. Ca(2+) is bound by residues aspartate 62, asparagine 64, arginine 68, and aspartate 73. Positions 82-637 are necessary for interaction with RAB11A, subcellular location, homo- or heterooligomerization; it reads KGCEELLKDV…HNPSILEIKH (556 aa). Disordered stretches follow at residues 138 to 175 and 219 to 256; these read EEEA…PAEK and YGEG…SAGQ. A coiled-coil region spans residues 280–617; it reads KINLLNDLEA…EEINFRLRQY (338 aa). The region spanning 574 to 636 is the FIP-RBD domain; sequence EAKNLFAAQT…DHNPSILEIK (63 aa).

Homodimer. Forms a complex with Rab11 (RAB11A or RAB11B) and ARF6. Interacts with RAB11A; the interaction is direct. Forms a heterooligomeric complex with RAB11FIP2, RAB11FIP3 and RAB11FIP5. Interacts with ECPAS. As to quaternary structure, (Microbial infection) Interacts with human cytomegalovirus/HHV-5 protein gM/UL100. Present at high level in testis (at protein level). Weakly expressed in other tissues.

The protein localises to the endosome. Its subcellular location is the cytoplasm. It localises to the cytoskeleton. The protein resides in the spindle. It is found in the microtubule organizing center. The protein localises to the centrosome. Its subcellular location is the recycling endosome membrane. It localises to the cleavage furrow. The protein resides in the midbody. It is found in the cytoplasmic vesicle. In terms of biological role, acts as a regulator of endocytic traffic by participating in membrane delivery. Required for the abscission step in cytokinesis, possibly by acting as an 'address tag' delivering recycling endosome membranes to the cleavage furrow during late cytokinesis. In case of infection by HCMV (human cytomegalovirus), may participate in egress of the virus out of nucleus; this function is independent of ARF6. The sequence is that of Rab11 family-interacting protein 4 (RAB11FIP4) from Homo sapiens (Human).